Consider the following 1370-residue polypeptide: DNA-directed RNA polymerase subunit beta (1370 aa).

The protein belongs to the RNA polymerase beta chain family. In terms of assembly, the RNAP catalytic core consists of 2 alpha, 1 beta, 1 beta' and 1 omega subunit. When a sigma factor is associated with the core the holoenzyme is formed, which can initiate transcription.

The enzyme catalyses RNA(n) + a ribonucleoside 5'-triphosphate = RNA(n+1) + diphosphate. Functionally, DNA-dependent RNA polymerase catalyzes the transcription of DNA into RNA using the four ribonucleoside triphosphates as substrates. The polypeptide is DNA-directed RNA polymerase subunit beta (Delftia acidovorans (strain DSM 14801 / SPH-1)).